A 154-amino-acid polypeptide reads, in one-letter code: Large-conductance mechanosensitive channel (154 aa).

A run of 3 helical transmembrane segments spans residues 14-34 (VMDLAVGVVIGGAFGKIVTSL), 38-58 (IITPLIGLLLGKVDFSGLFIN), and 81-101 (GLFLNSVIDFVIIAFSIFIVI).

This sequence belongs to the MscL family. As to quaternary structure, homopentamer.

Its subcellular location is the cell membrane. Its function is as follows. Channel that opens in response to stretch forces in the membrane lipid bilayer. May participate in the regulation of osmotic pressure changes within the cell. This Brevibacillus brevis (strain 47 / JCM 6285 / NBRC 100599) protein is Large-conductance mechanosensitive channel.